The primary structure comprises 105 residues: Small ribosomal subunit protein uS10 (105 aa).

The protein belongs to the universal ribosomal protein uS10 family. In terms of assembly, part of the 30S ribosomal subunit.

Its function is as follows. Involved in the binding of tRNA to the ribosomes. The chain is Small ribosomal subunit protein uS10 from Anaplasma phagocytophilum (strain HZ).